The sequence spans 522 residues: Protein nucleotidyltransferase YdiU (522 aa).

Residues Gly109, Gly111, Arg112, Lys132, Asp144, Gly145, Arg195, and Arg202 each contribute to the ATP site. Catalysis depends on Asp271, which acts as the Proton acceptor. 2 residues coordinate Mg(2+): Asn272 and Asp281. Asp281 is a binding site for ATP.

The protein belongs to the SELO family. The cofactor is Mg(2+). Mn(2+) is required as a cofactor.

It carries out the reaction L-seryl-[protein] + ATP = 3-O-(5'-adenylyl)-L-seryl-[protein] + diphosphate. The catalysed reaction is L-threonyl-[protein] + ATP = 3-O-(5'-adenylyl)-L-threonyl-[protein] + diphosphate. The enzyme catalyses L-tyrosyl-[protein] + ATP = O-(5'-adenylyl)-L-tyrosyl-[protein] + diphosphate. It catalyses the reaction L-histidyl-[protein] + UTP = N(tele)-(5'-uridylyl)-L-histidyl-[protein] + diphosphate. It carries out the reaction L-seryl-[protein] + UTP = O-(5'-uridylyl)-L-seryl-[protein] + diphosphate. The catalysed reaction is L-tyrosyl-[protein] + UTP = O-(5'-uridylyl)-L-tyrosyl-[protein] + diphosphate. Its function is as follows. Nucleotidyltransferase involved in the post-translational modification of proteins. It can catalyze the addition of adenosine monophosphate (AMP) or uridine monophosphate (UMP) to a protein, resulting in modifications known as AMPylation and UMPylation. This is Protein nucleotidyltransferase YdiU from Burkholderia ambifaria (strain MC40-6).